Here is an 849-residue protein sequence, read N- to C-terminus: Lysine-specific histone demethylase 1 homolog 1 (849 aa).

A disordered region spans residues 1-118 (MEEGSEAQPP…RRRRKKQFPG (118 aa)). Composition is skewed to low complexity over residues 34-67 (GQAAAAEAMEGEAEGAAAAAGTIEGEAGYAAADA) and 89-103 (PTSSAPSATAAVDDS). Residues 106-115 (ARKRRRRKKQ) are compositionally biased toward basic residues. Positions 159–260 (ARELDAEALI…FGLAPSVISL (102 aa)) constitute an SWIRM domain. FAD is bound by residues E300, R302, R308, and E688.

It belongs to the flavin monoamine oxidase family. It depends on FAD as a cofactor.

In terms of biological role, probable histone demethylase. This is Lysine-specific histone demethylase 1 homolog 1 from Oryza sativa subsp. japonica (Rice).